We begin with the raw amino-acid sequence, 178 residues long: Mediator of RNA polymerase II transcription subunit 28 (178 aa).

The tract at residues Met1–Gly25 is disordered. Residues Gln109 to Asp145 are a coiled coil.

The protein belongs to the Mediator complex subunit 28 family. In terms of assembly, component of the Mediator complex, which is composed of MED1, MED4, MED6, MED7, MED8, MED9, MED10, MED11, MED12, MED13, MED13L, MED14, MED15, MED16, MED17, MED18, MED19, MED20, MED21, MED22, MED23, MED24, MED25, MED26, MED27, MED29, MED30, MED31, CCNC, CDK8 and CDC2L6/CDK11. The MED12, MED13, CCNC and CDK8 subunits form a distinct module termed the CDK8 module. Mediator containing the CDK8 module is less active than Mediator lacking this module in supporting transcriptional activation. Individual preparations of the Mediator complex lacking one or more distinct subunits have been variously termed ARC, CRSP, DRIP, PC2, SMCC and TRAP. Forms a ternary complex with NF2/merlin and GRB2. Binds to actin.

The protein resides in the nucleus. It localises to the cytoplasm. Its subcellular location is the membrane. Functionally, component of the Mediator complex, a coactivator involved in the regulated transcription of nearly all RNA polymerase II-dependent genes. Mediator functions as a bridge to convey information from gene-specific regulatory proteins to the basal RNA polymerase II transcription machinery. Mediator is recruited to promoters by direct interactions with regulatory proteins and serves as a scaffold for the assembly of a functional preinitiation complex with RNA polymerase II and the general transcription factors. May be part of a complex containing NF2/merlin that participates in cellular signaling to the actin cytoskeleton downstream of tyrosine kinase signaling pathways. The chain is Mediator of RNA polymerase II transcription subunit 28 (MED28) from Bos taurus (Bovine).